The chain runs to 131 residues: Mesogenin-1 (131 aa).

The segment at 22–79 (EDRSFGDSASSPESESFDSACSSPDARSSPTAGCEHAEQQKPKVKMSMRRRMKASERE) is disordered. A compositionally biased stretch (low complexity) spans 27-45 (GDSASSPESESFDSACSSP). Residues 63 to 73 (PKVKMSMRRRM) are compositionally biased toward basic residues. Residues 70 to 124 (RRRMKASEREKLRMRSLAEALHQLRDYLPPGYSRRGQPLTKIQTLKYTIQYIKEL) form the bHLH domain.

As to expression, coexpression of ntl and spt is required for expression.

It localises to the nucleus. Its function is as follows. Involved in specifying the paraxial, but not dorsal, mesoderm. May regulate the expression of T-box transcription factors required for mesoderm formation and differentiation. This Danio rerio (Zebrafish) protein is Mesogenin-1 (msgn1).